Here is a 148-residue protein sequence, read N- to C-terminus: Large-conductance mechanosensitive channel (148 aa).

Transmembrane regions (helical) follow at residues 9–29 (AFAV…GAAF) and 79–99 (IQTV…VKAI).

The protein belongs to the MscL family. Homopentamer.

Its subcellular location is the cell inner membrane. In terms of biological role, channel that opens in response to stretch forces in the membrane lipid bilayer. May participate in the regulation of osmotic pressure changes within the cell. The sequence is that of Large-conductance mechanosensitive channel from Pseudomonas savastanoi pv. phaseolicola (strain 1448A / Race 6) (Pseudomonas syringae pv. phaseolicola (strain 1448A / Race 6)).